We begin with the raw amino-acid sequence, 47 residues long: Large ribosomal subunit protein bL34 (47 aa).

This sequence belongs to the bacterial ribosomal protein bL34 family.

The sequence is that of Large ribosomal subunit protein bL34 from Mycobacterium tuberculosis (strain ATCC 25177 / H37Ra).